A 350-amino-acid chain; its full sequence is Selenide, water dikinase (350 aa).

The active site involves Cys17. ATP-binding positions include Lys20 and 48-50 (LFD). Asp51 contacts Mg(2+). Residues Asp68, Asp91, and 139–141 (GHS) contribute to the ATP site. Asp91 serves as a coordination point for Mg(2+). Position 229 (Asp229) interacts with Mg(2+).

It belongs to the selenophosphate synthase 1 family. Class I subfamily. Homodimer. Requires Mg(2+) as cofactor.

The catalysed reaction is hydrogenselenide + ATP + H2O = selenophosphate + AMP + phosphate + 2 H(+). Its function is as follows. Synthesizes selenophosphate from selenide and ATP. This Bdellovibrio bacteriovorus (strain ATCC 15356 / DSM 50701 / NCIMB 9529 / HD100) protein is Selenide, water dikinase.